Consider the following 343-residue polypeptide: 4-hydroxy-2-oxovalerate aldolase (343 aa).

In terms of domain architecture, Pyruvate carboxyltransferase spans I5 to L256. R13 to D14 contributes to the substrate binding site. D14 provides a ligand contact to Mn(2+). H17 serves as the catalytic Proton acceptor. Positions 168 and 195 each coordinate substrate. H195 and H197 together coordinate Mn(2+).

This sequence belongs to the 4-hydroxy-2-oxovalerate aldolase family. As to quaternary structure, interacts with MhpF.

The catalysed reaction is (S)-4-hydroxy-2-oxopentanoate = acetaldehyde + pyruvate. It participates in aromatic compound metabolism; 3-phenylpropanoate degradation. Catalyzes the retro-aldol cleavage of 4-hydroxy-2-oxopentanoate to pyruvate and acetaldehyde. Is involved in the meta-cleavage pathway for the degradation of aromatic compounds. This chain is 4-hydroxy-2-oxovalerate aldolase, found in Pectobacterium atrosepticum (strain SCRI 1043 / ATCC BAA-672) (Erwinia carotovora subsp. atroseptica).